Here is a 711-residue protein sequence, read N- to C-terminus: C-Jun-amino-terminal kinase-interacting protein 1 (711 aa).

The segment at 1-27 (MAERESGGLGGGAASPPAASPFLGLHI) is disordered. Low complexity predominate over residues 14 to 25 (ASPPAASPFLGL). Phosphoserine occurs at positions 15, 29, and 40. Residues 78–371 (AGGGGAGSRL…PPRASLSSDT (294 aa)) form a disordered region. Position 103 is a phosphothreonine; by MAPK8, MAPK9 and MAPK10 (threonine 103). Acidic residues predominate over residues 105-116 (GAEDDEEDDDEE). Positions 127–285 (PKAESGQEPA…EATEEIYLTP (159 aa)) are JNK-binding domain (JBD). Over residues 139–149 (GQGQSQGQSQG) the composition is skewed to low complexity. Serine 152 bears the Phosphoserine mark. Residues 157–176 (RPKRPTTLNLFPQVPRSQDT) form a minimal inhibitory domain (MID) region. Over residues 162–182 (TTLNLFPQVPRSQDTLNNNSL) the composition is skewed to polar residues. Phosphoserine is present on residues serine 181, serine 187, serine 193, serine 195, and serine 196. A compositionally biased stretch (polar residues) spans 194 to 204 (RSSSPLKTGEQ). Residue threonine 205 is modified to Phosphothreonine; by MAPK8, MAPK9 and MAPK10. Serine 214 carries the post-translational modification Phosphoserine. Polar residues predominate over residues 228 to 244 (DRGTSTDSPCRRSTATQ). Residues 267–277 (IHYQADVRLEA) are compositionally biased toward basic and acidic residues. The segment at 283–471 (LTPVQRPPDA…NVFMSGRSRS (189 aa)) is interaction with MAP3K7. Phosphoserine occurs at positions 311, 328, 330, 340, 355, 366, 369, 407, and 409. Short sequence motifs (D-box) lie at residues 353 to 360 (RGSLGEPP) and 364 to 372 (RASLSSDTS). At threonine 411 the chain carries Phosphothreonine. The disordered stretch occupies residues 429–451 (EEYEEAPRPQPPACLSEDSTPDE). Phosphoserine occurs at positions 444 and 447. Threonine 448 is subject to Phosphothreonine. A phosphoserine mark is found at serine 469, serine 471, serine 472, and serine 473. Residues 471–660 (SSSAESFGLF…PKNNKYFGFI (190 aa)) are interaction with VRK2. One can recognise an SH3 domain in the interval 488–549 (EQEQTHRAIF…PAYYAIEVTK (62 aa)). In terms of domain architecture, PID spans 561–700 (SDWVDQFRVK…FQQFYKQFVE (140 aa)).

This sequence belongs to the JIP scaffold family. In terms of assembly, forms homo- or heterooligomeric complexes. Binds specific components of the JNK signaling pathway namely, MAPK8/JNK1, MAPK9/JNK2, MAPK10/JNK3, MAP2K7/MKK7, MAP3K11/MLK3 and DLK1. Also binds the proline-rich domain-containing splice variant of apolipoprotein E receptor 2 (ApoER2). Interacts, via the PID domain, with ARHGEF28. Binds the cytoplasmic tails of LRP1 and LRP2 (Megalin). Binds the TPR motif-containing C-terminal of KNS2, then the pre-assembled MAPK8IP1 scaffolding complexes are transported as a cargo of kinesin, to the required subcellular location. Interacts with the cytoplasmic domain of APP. Interacts with DCLK2. Interacts with MAP3K7/TAK1. Interacts with isoform 1 and isoform 2 of VRK2. Found in a complex with SH3RF1, RAC1, MAP3K11/MLK3, MAP2K7/MKK7 and MAPK8/JNK1. Found in a complex with SH3RF1, RAC2, MAP3K7/TAK1, MAP2K7/MKK7, MAPK8/JNK1 and MAPK9/JNK2. Interacts with SH3RF2. Post-translationally, phosphorylated by MAPK8, MAPK9 and MAPK10. Phosphorylation on Thr-103 is also necessary for the dissociation and activation of MAP3K12. Phosphorylated by isoform 1 and isoform 2 of VRK2. Hyperphosphorylated during mitosis following activation of stress-activated and MAP kinases. In terms of processing, ubiquitinated. Two preliminary events are required to prime for ubiquitination; phosphorylation and an increased in intracellular calcium concentration. Then, the calcium influx initiates ubiquitination and degradation by the ubiquitin-proteasome pathway. As to expression, highly expressed in brain. Expressed in neurons, localizing to neurite tips in differentiating cells. Also expressed in the pancreas, testis and prostate. Low levels in heart, ovary and small intestine. Decreased levels in pancreatic beta cells sensitize cells to IL-1-beta-induced apoptosis.

The protein resides in the cytoplasm. Its subcellular location is the perinuclear region. It localises to the nucleus. The protein localises to the endoplasmic reticulum membrane. It is found in the mitochondrion membrane. Functionally, the JNK-interacting protein (JIP) group of scaffold proteins selectively mediates JNK signaling by aggregating specific components of the MAPK cascade to form a functional JNK signaling module. Required for JNK activation in response to excitotoxic stress. Cytoplasmic MAPK8IP1 causes inhibition of JNK-regulated activity by retaining JNK in the cytoplasm and inhibiting JNK phosphorylation of c-Jun. May also participate in ApoER2-specific reelin signaling. Directly, or indirectly, regulates GLUT2 gene expression and beta-cell function. Appears to have a role in cell signaling in mature and developing nerve terminals. May function as a regulator of vesicle transport, through interactions with the JNK-signaling components and motor proteins. Functions as an anti-apoptotic protein and whose level seems to influence the beta-cell death or survival response. Acts as a scaffold protein that coordinates with SH3RF1 in organizing different components of the JNK pathway, including RAC1 or RAC2, MAP3K11/MLK3 or MAP3K7/TAK1, MAP2K7/MKK7, MAPK8/JNK1 and/or MAPK9/JNK2 into a functional multiprotein complex to ensure the effective activation of the JNK signaling pathway. Regulates the activation of MAPK8/JNK1 and differentiation of CD8(+) T-cells. The protein is C-Jun-amino-terminal kinase-interacting protein 1 (MAPK8IP1) of Homo sapiens (Human).